Here is a 335-residue protein sequence, read N- to C-terminus: Eukaryotic translation initiation factor 3 subunit H-A (335 aa).

The MPN domain maps to 22 to 156; sequence IQVDGLVVLK…LKAYRLTPKL (135 aa). Residues 254 to 272 show a composition bias toward low complexity; sequence QQQKQQYQQRRQQENAQRQ. The segment at 254–282 is disordered; it reads QQQKQQYQQRRQQENAQRQSRGEPPLPEE.

Belongs to the eIF-3 subunit H family. In terms of assembly, component of the eukaryotic translation initiation factor 3 (eIF-3) complex, which is composed of 13 subunits: eif3a, eif3b, eif3c, eif3d, eif3e, eif3f, eif3g, eif3h, eif3i, eif3j, eif3k, eif3l and eif3m.

It is found in the cytoplasm. Functionally, component of the eukaryotic translation initiation factor 3 (eIF-3) complex, which is involved in protein synthesis of a specialized repertoire of mRNAs and, together with other initiation factors, stimulates binding of mRNA and methionyl-tRNAi to the 40S ribosome. The eIF-3 complex specifically targets and initiates translation of a subset of mRNAs involved in cell proliferation. This Danio rerio (Zebrafish) protein is Eukaryotic translation initiation factor 3 subunit H-A (eif3ha).